The following is a 774-amino-acid chain: Armadillo-like helical domain-containing protein 4 (774 aa).

Residues 1–27 form the signal peptide; sequence MRGPIVLHICLAFCSLLLFSVATQCLA. Residues 28–714 lie on the Extracellular side of the membrane; it reads FPKIERRREI…KDKAGYMSGM (687 aa). A compositionally biased stretch (basic and acidic residues) spans 41–52; that stretch reads HAEKGQSDKMNT. 2 disordered regions span residues 41–63 and 97–135; these read HAEK…VTSK and QPGQ…ERIS. N57 carries an N-linked (GlcNAc...) asparagine glycan. Residue N189 is glycosylated (N-linked (GlcNAc...) asparagine). The segment covering 221-233 has biased composition (basic and acidic residues); that stretch reads KTEKFEADTDHRT. 2 disordered regions span residues 221–275 and 600–669; these read KTEK…QPLE and ASYG…PGLE. Polar residues predominate over residues 258–275; the sequence is SQMTADNTQAAATKQPLE. The span at 607–651 shows a compositional bias: acidic residues; sequence LESEEGQEDEDEEDEEDEDEEEEDEEEDEEDKDADSLDEGLDGDT. The chain crosses the membrane as a helical span at residues 715–735; it reads LVPVGVGIAGALFILGALYSI. At 736–774 the chain is on the cytoplasmic side; sequence KVMNRRRRNGFKRHKRKQREFNSMQDRVMLLADSSEDEF. A phosphoserine mark is found at S769 and S770.

In terms of assembly, interacts with IL6ST; this interaction prevents IL6ST protein homodimerization and bridges ARMH4 with IL6R and STAT3 and therefore inhibits phosphorylation of STAT3 at 'Tyr-705'. Interacts (via cytoplasmic tail) with RICTOR; this interaction bridges ARMH4 to the mTORC2 complex and inhibits the mTORC2 kinase activity. In terms of tissue distribution, expressed in podocytes.

Its subcellular location is the membrane. In terms of biological role, may modulate immune response and may play a role in inflammation. Down-modulates STAT3 signaling throught direct interaction with IL6ST, resulting in the inhibition of phosphorylation of STAT3 at 'Tyr-705'. May negatively regulates AKT signaling by modulating the activity of mTORC2 complex through RICTOR interaction. This Homo sapiens (Human) protein is Armadillo-like helical domain-containing protein 4.